Here is an 815-residue protein sequence, read N- to C-terminus: Protein pygopus (815 aa).

Disordered regions lie at residues 1 to 107 and 147 to 711; these read MTHN…QVSA and GMGG…GPMG. A Nuclear localization signal motif is present at residues 39–45; the sequence is PKKRRKT. The segment covering 46 to 73 has biased composition (low complexity); that stretch reads SSAANSAAAVAAAAAAAAAANSMQQQQA. Pro residues predominate over residues 74–86; the sequence is PPTPQDLLPPPPM. The segment covering 188–199 has biased composition (low complexity); it reads RGMSPMHPHQMG. Composition is skewed to gly residues over residues 230–248 and 257–269; these read PMGG…GMGG and GMGG…GGPN. Residues 307–316 show a composition bias toward pro residues; sequence LGPPSGPGPG. 4 stretches are compositionally biased toward low complexity: residues 323 to 341, 407 to 424, 444 to 478, and 495 to 545; these read GPQQ…NGQM, SNNN…NQNP, PSVS…VPTS, and GPSP…HQQH. The span at 569-580 shows a compositional bias: pro residues; sequence PQQPSHLGPPHP. Gly residues predominate over residues 602–621; the sequence is GGPGMHGGPAGMPPHMGGGP. Residues 622-636 are compositionally biased toward low complexity; it reads NPHMMGGPHGNAGPH. Residues 640 to 656 show a composition bias toward gly residues; sequence GHMGGVPGPGPGPGGMN. Over residues 663-675 the composition is skewed to basic residues; it reads MSPHHGHPHHHHN. Residues 678–711 are compositionally biased toward gly residues; that stretch reads GGPGPNMFGGGGGGPMGPGGPMGNMGPMGGGPMG. The PHD-type zinc-finger motif lies at 747 to 805; that stretch reads IYPCGMCHKEVNDNDEAVFCESGCNFFFHRTCVGLTEAAFQMLNKEVFAEWCCDKCVSS.

As to quaternary structure, binds to BCL9 via the PHD-type zinc finger motif, and thereby becomes part of the nuclear ARM/PAN complex. In terms of tissue distribution, ubiquitous throughout embryogenesis and larval development.

The protein localises to the nucleus. In terms of biological role, involved in signal transduction through the Wnt pathway. The chain is Protein pygopus (pygo) from Drosophila melanogaster (Fruit fly).